The primary structure comprises 116 residues: NADPH-dependent 7-cyano-7-deazaguanine reductase (116 aa).

Cys-31 acts as the Thioimide intermediate in catalysis. Residue Asp-38 is the Proton donor of the active site. Substrate contacts are provided by residues 53–55 (VEL) and 72–73 (YE).

This sequence belongs to the GTP cyclohydrolase I family. QueF type 1 subfamily.

The protein localises to the cytoplasm. The enzyme catalyses 7-aminomethyl-7-carbaguanine + 2 NADP(+) = 7-cyano-7-deazaguanine + 2 NADPH + 3 H(+). It functions in the pathway tRNA modification; tRNA-queuosine biosynthesis. Functionally, catalyzes the NADPH-dependent reduction of 7-cyano-7-deazaguanine (preQ0) to 7-aminomethyl-7-deazaguanine (preQ1). In Chlorobium chlorochromatii (strain CaD3), this protein is NADPH-dependent 7-cyano-7-deazaguanine reductase.